The primary structure comprises 257 residues: 1-(5-phosphoribosyl)-5-[(5-phosphoribosylamino)methylideneamino] imidazole-4-carboxamide isomerase (257 aa).

Catalysis depends on Asp-8, which acts as the Proton acceptor. The active-site Proton donor is the Asp-131.

This sequence belongs to the HisA/HisF family.

The protein resides in the cytoplasm. The catalysed reaction is 1-(5-phospho-beta-D-ribosyl)-5-[(5-phospho-beta-D-ribosylamino)methylideneamino]imidazole-4-carboxamide = 5-[(5-phospho-1-deoxy-D-ribulos-1-ylimino)methylamino]-1-(5-phospho-beta-D-ribosyl)imidazole-4-carboxamide. The protein operates within amino-acid biosynthesis; L-histidine biosynthesis; L-histidine from 5-phospho-alpha-D-ribose 1-diphosphate: step 4/9. The polypeptide is 1-(5-phosphoribosyl)-5-[(5-phosphoribosylamino)methylideneamino] imidazole-4-carboxamide isomerase (Nitrosospira multiformis (strain ATCC 25196 / NCIMB 11849 / C 71)).